The following is a 95-amino-acid chain: Aspartyl/glutamyl-tRNA(Asn/Gln) amidotransferase subunit C (95 aa).

Belongs to the GatC family. In terms of assembly, heterotrimer of A, B and C subunits.

The catalysed reaction is L-glutamyl-tRNA(Gln) + L-glutamine + ATP + H2O = L-glutaminyl-tRNA(Gln) + L-glutamate + ADP + phosphate + H(+). It carries out the reaction L-aspartyl-tRNA(Asn) + L-glutamine + ATP + H2O = L-asparaginyl-tRNA(Asn) + L-glutamate + ADP + phosphate + 2 H(+). Functionally, allows the formation of correctly charged Asn-tRNA(Asn) or Gln-tRNA(Gln) through the transamidation of misacylated Asp-tRNA(Asn) or Glu-tRNA(Gln) in organisms which lack either or both of asparaginyl-tRNA or glutaminyl-tRNA synthetases. The reaction takes place in the presence of glutamine and ATP through an activated phospho-Asp-tRNA(Asn) or phospho-Glu-tRNA(Gln). The chain is Aspartyl/glutamyl-tRNA(Asn/Gln) amidotransferase subunit C from Anaeromyxobacter sp. (strain Fw109-5).